A 338-amino-acid polypeptide reads, in one-letter code: Heat-inducible transcription repressor HrcA (338 aa).

It belongs to the HrcA family.

In terms of biological role, negative regulator of class I heat shock genes (grpE-dnaK-dnaJ and groELS operons). Prevents heat-shock induction of these operons. The protein is Heat-inducible transcription repressor HrcA of Streptomyces albus G.